The following is a 343-amino-acid chain: Ferredoxin--NADP reductase (343 aa).

Positions 36, 44, 49, 89, 124, 289, and 330 each coordinate FAD.

It belongs to the ferredoxin--NADP reductase type 2 family. As to quaternary structure, homodimer. FAD is required as a cofactor.

It carries out the reaction 2 reduced [2Fe-2S]-[ferredoxin] + NADP(+) + H(+) = 2 oxidized [2Fe-2S]-[ferredoxin] + NADPH. In Mesorhizobium japonicum (strain LMG 29417 / CECT 9101 / MAFF 303099) (Mesorhizobium loti (strain MAFF 303099)), this protein is Ferredoxin--NADP reductase.